The sequence spans 428 residues: Maltoporin (428 aa).

The signal sequence occupies residues Met1–Ala21.

Belongs to the porin LamB (TC 1.B.3) family. As to quaternary structure, homotrimer formed of three 18-stranded antiparallel beta-barrels, containing three independent channels.

The protein localises to the cell outer membrane. It carries out the reaction beta-maltose(in) = beta-maltose(out). Functionally, involved in the transport of maltose and maltodextrins. The sequence is that of Maltoporin from Mannheimia succiniciproducens (strain KCTC 0769BP / MBEL55E).